Consider the following 235-residue polypeptide: Uridylate kinase (235 aa).

8 to 11 (KFSG) contacts ATP. The interval 16-21 (GAEGYG) is involved in allosteric activation by GTP. Gly-50 is a UMP binding site. ATP is bound by residues Gly-51 and Arg-55. UMP is bound by residues Asp-71 and 132 to 139 (TGNPYFTT). ATP is bound by residues Thr-159, Tyr-165, and Asp-168.

This sequence belongs to the UMP kinase family. As to quaternary structure, homohexamer.

The protein localises to the cytoplasm. It carries out the reaction UMP + ATP = UDP + ADP. Its pathway is pyrimidine metabolism; CTP biosynthesis via de novo pathway; UDP from UMP (UMPK route): step 1/1. Its activity is regulated as follows. Allosterically activated by GTP. Inhibited by UTP. Functionally, catalyzes the reversible phosphorylation of UMP to UDP. This is Uridylate kinase from Aliarcobacter butzleri (strain RM4018) (Arcobacter butzleri).